The primary structure comprises 278 residues: Probable ribosomal RNA small subunit methyltransferase A (278 aa).

The S-adenosyl-L-methionine site is built by Asn23, Leu25, Gly50, Glu71, Asp95, and Asn110.

Belongs to the class I-like SAM-binding methyltransferase superfamily. rRNA adenine N(6)-methyltransferase family. RsmA subfamily.

Its subcellular location is the cytoplasm. Specifically dimethylates two adjacent adenosines in the loop of a conserved hairpin near the 3'-end of 16S rRNA in the 30S particle. May play a critical role in biogenesis of 30S subunits. The polypeptide is Probable ribosomal RNA small subunit methyltransferase A (Thermococcus gammatolerans (strain DSM 15229 / JCM 11827 / EJ3)).